The primary structure comprises 258 residues: Aspartate/glutamate leucyltransferase (258 aa).

It belongs to the R-transferase family. Bpt subfamily.

It localises to the cytoplasm. The enzyme catalyses N-terminal L-glutamyl-[protein] + L-leucyl-tRNA(Leu) = N-terminal L-leucyl-L-glutamyl-[protein] + tRNA(Leu) + H(+). It carries out the reaction N-terminal L-aspartyl-[protein] + L-leucyl-tRNA(Leu) = N-terminal L-leucyl-L-aspartyl-[protein] + tRNA(Leu) + H(+). In terms of biological role, functions in the N-end rule pathway of protein degradation where it conjugates Leu from its aminoacyl-tRNA to the N-termini of proteins containing an N-terminal aspartate or glutamate. The sequence is that of Aspartate/glutamate leucyltransferase from Rhodopseudomonas palustris (strain BisA53).